We begin with the raw amino-acid sequence, 249 residues long: 5'-nucleotidase SurE (249 aa).

A divalent metal cation is bound by residues Asp-9, Asp-10, Ser-40, and Asn-92.

This sequence belongs to the SurE nucleotidase family. The cofactor is a divalent metal cation.

The protein resides in the cytoplasm. It catalyses the reaction a ribonucleoside 5'-phosphate + H2O = a ribonucleoside + phosphate. In terms of biological role, nucleotidase that shows phosphatase activity on nucleoside 5'-monophosphates. The protein is 5'-nucleotidase SurE of Shewanella oneidensis (strain ATCC 700550 / JCM 31522 / CIP 106686 / LMG 19005 / NCIMB 14063 / MR-1).